The sequence spans 480 residues: Ribosomal RNA small subunit methyltransferase F (480 aa).

S-adenosyl-L-methionine contacts are provided by residues 126–132 (AAAPGSK), glutamate 150, aspartate 177, and aspartate 195. Catalysis depends on cysteine 248, which acts as the Nucleophile.

The protein belongs to the class I-like SAM-binding methyltransferase superfamily. RsmB/NOP family.

The protein resides in the cytoplasm. It catalyses the reaction cytidine(1407) in 16S rRNA + S-adenosyl-L-methionine = 5-methylcytidine(1407) in 16S rRNA + S-adenosyl-L-homocysteine + H(+). Functionally, specifically methylates the cytosine at position 1407 (m5C1407) of 16S rRNA. The protein is Ribosomal RNA small subunit methyltransferase F of Cronobacter sakazakii (strain ATCC BAA-894) (Enterobacter sakazakii).